Consider the following 362-residue polypeptide: Bifunctional chorismate mutase/prephenate dehydratase (362 aa).

Positions 3–91 constitute a Chorismate mutase domain; sequence QTIDELLIPH…ECLAVERPLT (89 aa). Substrate is bound by residues R13, R30, K41, and E52. The Prephenate dehydratase domain occupies 92 to 269; sequence IAYLGPQGTF…NTTRFLVMGH (178 aa). Positions 281-356 constitute an ACT domain; the sequence is SLAVSAPNRA…RASFVKAIGS (76 aa).

It localises to the cytoplasm. The enzyme catalyses chorismate = prephenate. It catalyses the reaction prephenate + H(+) = 3-phenylpyruvate + CO2 + H2O. The protein operates within amino-acid biosynthesis; L-phenylalanine biosynthesis; phenylpyruvate from prephenate: step 1/1. Its pathway is metabolic intermediate biosynthesis; prephenate biosynthesis; prephenate from chorismate: step 1/1. Catalyzes the Claisen rearrangement of chorismate to prephenate and the decarboxylation/dehydration of prephenate to phenylpyruvate. The polypeptide is Bifunctional chorismate mutase/prephenate dehydratase (pheA) (Neisseria gonorrhoeae (strain ATCC 700825 / FA 1090)).